The chain runs to 442 residues: L-seryl-tRNA(Sec) selenium transferase (442 aa).

N6-(pyridoxal phosphate)lysine is present on lysine 284.

It belongs to the SelA family. Pyridoxal 5'-phosphate serves as cofactor.

It is found in the cytoplasm. The enzyme catalyses L-seryl-tRNA(Sec) + selenophosphate + H(+) = L-selenocysteinyl-tRNA(Sec) + phosphate. It functions in the pathway aminoacyl-tRNA biosynthesis; selenocysteinyl-tRNA(Sec) biosynthesis; selenocysteinyl-tRNA(Sec) from L-seryl-tRNA(Sec) (bacterial route): step 1/1. Its function is as follows. Converts seryl-tRNA(Sec) to selenocysteinyl-tRNA(Sec) required for selenoprotein biosynthesis. The chain is L-seryl-tRNA(Sec) selenium transferase from Campylobacter fetus subsp. fetus (strain 82-40).